We begin with the raw amino-acid sequence, 371 residues long: Aminomethyltransferase (371 aa).

This sequence belongs to the GcvT family. In terms of assembly, the glycine cleavage system is composed of four proteins: P, T, L and H.

The enzyme catalyses N(6)-[(R)-S(8)-aminomethyldihydrolipoyl]-L-lysyl-[protein] + (6S)-5,6,7,8-tetrahydrofolate = N(6)-[(R)-dihydrolipoyl]-L-lysyl-[protein] + (6R)-5,10-methylene-5,6,7,8-tetrahydrofolate + NH4(+). The glycine cleavage system catalyzes the degradation of glycine. The sequence is that of Aminomethyltransferase from Oceanobacillus iheyensis (strain DSM 14371 / CIP 107618 / JCM 11309 / KCTC 3954 / HTE831).